We begin with the raw amino-acid sequence, 475 residues long: BTB/POZ domain-containing protein 10 (475 aa).

The segment at 1 to 144 (MAGRPHPYDS…SQSSSDGSCK (144 aa)) is disordered. Residues 22–31 (LHSRPRKLYK) show a composition bias toward basic residues. Positions 57–80 (GHERSRDRRRSSDRSRDSSHERAE) are enriched in basic and acidic residues. The segment covering 81–94 (SQLTPCIRNVTSPT) has biased composition (polar residues). Positions 97–107 (HHIEREKDHSS) are enriched in basic and acidic residues. Low complexity predominate over residues 108 to 144 (SRPSSPRPQRASPNGSMSSAGNSSRNSSQSSSDGSCK). Residues 146-475 (SGEMVFVYEN…LDPDAQNPML (330 aa)) are interaction with AKT family members. In terms of domain architecture, BTB spans 167-241 (ERVTLIVDNT…YKTGIIRCPD (75 aa)). The interval 451–475 (ELDILPSHPASGNNDLDPDAQNPML) is disordered.

Interacts (via C-terminal 330-amino-acid region) with AKT1; AKT2 and AKT3. Interacts with PPP2CA and PPP1CA. In terms of tissue distribution, ubiquitously expressed (at protein level).

Its subcellular location is the nucleus. The protein resides in the cytoplasm. Its function is as follows. Plays a major role as an activator of AKT family members by inhibiting PPP2CA-mediated dephosphorylation, thereby keeping AKTs activated. Plays a role in preventing motor neuronal death and in accelerating the growth of pancreatic beta cells. The sequence is that of BTB/POZ domain-containing protein 10 (Btbd10) from Mus musculus (Mouse).